The primary structure comprises 432 residues: Golgin subfamily A member 6-like protein 9 (432 aa).

Over residues 1–11 the composition is skewed to pro residues; sequence MWPQPRLPPHP. Disordered regions lie at residues 1–77 and 349–411; these read MWPQ…YGEG and KELE…AGGA. Residues 51–62 are compositionally biased toward polar residues; the sequence is NGSSPDTFTSGG. A coiled-coil region spans residues 157–354; sequence SKMEQLQDET…EQQVKELEKS (198 aa). Residues 349 to 362 are compositionally biased toward basic and acidic residues; the sequence is KELEKSGGAEEPRG. Low complexity predominate over residues 366–381; that stretch reads AAAARPVAGAPVPQGA.

This sequence belongs to the GOLGA6 family.

The protein is Golgin subfamily A member 6-like protein 9 of Homo sapiens (Human).